A 399-amino-acid chain; its full sequence is Argonaute-binding protein 1 (399 aa).

As to quaternary structure, component of the argonaute siRNA chaperone (ARC) complex composed of ago1, arb1 and arb2. Interacts with ago1.

It is found in the nucleus. Its subcellular location is the cytoplasm. Its function is as follows. Component of the argonaute siRNA chaperone (ARC) complex which is required for histone H3K9 methylation, heterochromatin assembly and siRNA generation. The ARC complex contains mostly double-stranded siRNA. Inhibits the release of the siRNA passenger strand from ago1 together with arb2. Inhibits the slicer activity of ago1. Required for swi6 localization to the centromeric repeats. The polypeptide is Argonaute-binding protein 1 (arb1) (Schizosaccharomyces pombe (strain 972 / ATCC 24843) (Fission yeast)).